The sequence spans 436 residues: Glutamyl-tRNA reductase (436 aa).

Substrate is bound by residues 49 to 52, Ser118, 123 to 125, and Gln129; these read TCNR and EPQ. Cys50 acts as the Nucleophile in catalysis. 203–208 lines the NADP(+) pocket; sequence GAGETI.

Belongs to the glutamyl-tRNA reductase family. As to quaternary structure, homodimer.

The catalysed reaction is (S)-4-amino-5-oxopentanoate + tRNA(Glu) + NADP(+) = L-glutamyl-tRNA(Glu) + NADPH + H(+). It participates in porphyrin-containing compound metabolism; protoporphyrin-IX biosynthesis; 5-aminolevulinate from L-glutamyl-tRNA(Glu): step 1/2. Functionally, catalyzes the NADPH-dependent reduction of glutamyl-tRNA(Glu) to glutamate 1-semialdehyde (GSA). The polypeptide is Glutamyl-tRNA reductase (Actinobacillus pleuropneumoniae serotype 7 (strain AP76)).